Consider the following 82-residue polypeptide: Cytochrome b559 subunit alpha (82 aa).

Residues 21 to 35 traverse the membrane as a helical segment; it reads VIHSITIPALFIAGW. A heme-binding site is contributed by H23.

The protein belongs to the PsbE/PsbF family. As to quaternary structure, heterodimer of an alpha subunit and a beta subunit. PSII is composed of 1 copy each of membrane proteins PsbA, PsbB, PsbC, PsbD, PsbE, PsbF, PsbH, PsbI, PsbJ, PsbK, PsbL, PsbM, PsbT, PsbX, PsbY, PsbZ, Psb30/Ycf12, peripheral proteins PsbO, CyanoQ (PsbQ), PsbU, PsbV and a large number of cofactors. It forms dimeric complexes. Heme b is required as a cofactor.

The protein localises to the cellular thylakoid membrane. Its function is as follows. This b-type cytochrome is tightly associated with the reaction center of photosystem II (PSII). PSII is a light-driven water:plastoquinone oxidoreductase that uses light energy to abstract electrons from H(2)O, generating O(2) and a proton gradient subsequently used for ATP formation. It consists of a core antenna complex that captures photons, and an electron transfer chain that converts photonic excitation into a charge separation. The protein is Cytochrome b559 subunit alpha of Nostoc sp. (strain PCC 7120 / SAG 25.82 / UTEX 2576).